The chain runs to 148 residues: Cystatin-D (148 aa).

The N-terminal stretch at 1–33 is a signal peptide; it reads MASLLSPSMPVLAAVALTLTLAVIPEASTNAEA. A Cystatin kininogen-type domain is found at 36-148; it reads VVLGGVEPAD…SMTNFNCYNF (113 aa). 2 cysteine pairs are disulfide-bonded: C101/C111 and C125/C145.

The protein belongs to the cystatin family. As to expression, in cartilage, expressed mainly in mature chondrocytes including prehypertrophic and hypertrophic cells (at protein level). Expressed exclusively in cartilage.

The protein localises to the cytoplasm. The protein resides in the cytosol. May play a role in the last steps of the chondrocyte differentiation pathway as an inducer of maturation. Induces chondrocyte calcification during endochondral ossification by playing a role in the transcriptional inhibition of ENPP1, a generator of pyrophosphate which inhibits calcification. Possibly impairs the binding of a transcription factor to the ENPP1 promoter. Unlike other cystatins, does not have thiol protease inhibitor activity. The sequence is that of Cystatin-D from Mus musculus (Mouse).